A 70-amino-acid polypeptide reads, in one-letter code: Enhancer of split m6 protein (70 aa).

In Drosophila melanogaster (Fruit fly), this protein is Enhancer of split m6 protein.